A 126-amino-acid polypeptide reads, in one-letter code: Small ribosomal subunit protein uS13 (126 aa).

The interval 92-126 is disordered; it reads HRRGLPVRGQRTKTNARTRKGPKKTVAGKKKATRK.

The protein belongs to the universal ribosomal protein uS13 family. Part of the 30S ribosomal subunit. Forms a loose heterodimer with protein S19. Forms two bridges to the 50S subunit in the 70S ribosome.

In terms of biological role, located at the top of the head of the 30S subunit, it contacts several helices of the 16S rRNA. In the 70S ribosome it contacts the 23S rRNA (bridge B1a) and protein L5 of the 50S subunit (bridge B1b), connecting the 2 subunits; these bridges are implicated in subunit movement. Contacts the tRNAs in the A and P-sites. The protein is Small ribosomal subunit protein uS13 of Deinococcus deserti (strain DSM 17065 / CIP 109153 / LMG 22923 / VCD115).